The following is a 312-amino-acid chain: Acetyl-coenzyme A carboxylase carboxyl transferase subunit beta (312 aa).

The CoA carboxyltransferase N-terminal domain maps to 24–293; it reads LWIKCPDSGQ…PHADEVAAPP (270 aa). Residues 286-312 form a disordered region; it reads ADEVAAPPPPDVEGPPPAAEPVALPPA. Residues 291–312 are compositionally biased toward pro residues; it reads APPPPDVEGPPPAAEPVALPPA.

This sequence belongs to the AccD/PCCB family. In terms of assembly, acetyl-CoA carboxylase is a heterohexamer composed of biotin carboxyl carrier protein (AccB), biotin carboxylase (AccC) and two subunits each of ACCase subunit alpha (AccA) and ACCase subunit beta (AccD).

It is found in the cytoplasm. The enzyme catalyses N(6)-carboxybiotinyl-L-lysyl-[protein] + acetyl-CoA = N(6)-biotinyl-L-lysyl-[protein] + malonyl-CoA. Its pathway is lipid metabolism; malonyl-CoA biosynthesis; malonyl-CoA from acetyl-CoA: step 1/1. Component of the acetyl coenzyme A carboxylase (ACC) complex. Biotin carboxylase (BC) catalyzes the carboxylation of biotin on its carrier protein (BCCP) and then the CO(2) group is transferred by the transcarboxylase to acetyl-CoA to form malonyl-CoA. The protein is Acetyl-coenzyme A carboxylase carboxyl transferase subunit beta of Afipia carboxidovorans (strain ATCC 49405 / DSM 1227 / KCTC 32145 / OM5) (Oligotropha carboxidovorans).